The sequence spans 1296 residues: MLDVNVFDELRIGLATADDVRAWSHGEVKKPETINYRTLKPEKDGLFCEKIFGPTRDWECYCGKYKRVRFKGIICERCGVEVTRSKVRRERMGHIELAAPVTHIWYFKGVPSRLGYLLDLAPKDLEKVIYFAAYMITEVDDERRHTDLPSLQNEIDLERGEVAKRRDLDIEARAQRLEADLAELEAEGAKADARRKVRDSAEREMAQIRKRSDAELDRLERVWDRFKNLKVADLEGDELLYRELEQRYGSYFTGSMGAAAIQKRLETFDLDAEAEALRETIRSGKGQRKTRALKRLKVVNAFMTTTNSPLGMVLDCIPVIPPDLRPMVQLDGGRFATSDLNDLYRRVINRNNRLKRLLDLGAPEIIVNNEKRMLQEAVDALFDNGRRGRPVTGPGNRPLKSISDMLKGKQGRFRQNLLGKRVDYSGRSVIVVGPQLKLHQCGLPKQMALELFKPFVMKRLVDLNHAQNIKSAKRMVERARSVVWDVLEEVITEHPVLLNRAPTLHRLGIQAFEPQLVEGKAIHLHPLVCAAFNADFDGDQMAVHLPLSAEAQAEARILMLSSNNILKPSDGRPVTMPSQDMIIGLYHLTSDKDEALGAGRSFSSIAEAIMAFDAGGLDLNAVVKIRFTDLVPPTGFEAPEGWTEGESLLFETTLGRALFNEALPVDYPFVNGVVGKGELSVIVNDLAERYPKVEVAASLDALKEAGFSWATRSGVTIAISDVVTPSRKKEIVESYEKKAAKVQGQYEKGLITDEERRTELIDIWTQATNDVDAAMRENFPERNTVNRMVGSGARGNWMQVRQIAGMRGLVANPKGEIIPRPILSNYREGLSVVEYFIATHGARKGLADTALRTADSGYLTRRLVDVSQDVIIREEDCGTDRGLVTTIAEVGPDGVRRRSETVETGAYARTLATTVTSEDGTVLAEGGDDVGDVLISRLVEAGVDTIKVRSVLTCASRVGTCAKCYGRSLATGKLVDVGEAVGIIAAQSIGEPGTQLTMRTFHTGGVASADDITQGLPRVQELFEARTPKGEAPISEVAGRIAIDETDRTRRIVVTPDDGAEEIVYPITKRSRLLVNDGDHVAVGQQLIAGAVDPKKVLRILGPRAVQKHLVDEVQEVYRSQGVDIHDKHIEVIVRQMLRRVTVLDSGEANLLPGELAERGRFEDENRRVVSEGGTPASGRPELMGITKASLATDSWLSAASFQETTKVLTEAALSGRSDSLLGLKENVILGKLIPAGTGLPRYRNVRVEPTEEAKAELYPSFGYDEIDYLPLGTGSGEAIALEELDLGRGYEADYR.

Zn(2+) contacts are provided by Cys-60, Cys-62, Cys-75, and Cys-78. Mg(2+) is bound by residues Asp-535, Asp-537, and Asp-539. Zn(2+) is bound by residues Cys-877, Cys-954, Cys-961, and Cys-964.

Belongs to the RNA polymerase beta' chain family. In terms of assembly, the RNAP catalytic core consists of 2 alpha, 1 beta, 1 beta' and 1 omega subunit. When a sigma factor is associated with the core the holoenzyme is formed, which can initiate transcription. Requires Mg(2+) as cofactor. The cofactor is Zn(2+).

It carries out the reaction RNA(n) + a ribonucleoside 5'-triphosphate = RNA(n+1) + diphosphate. Functionally, DNA-dependent RNA polymerase catalyzes the transcription of DNA into RNA using the four ribonucleoside triphosphates as substrates. The polypeptide is DNA-directed RNA polymerase subunit beta' (Beutenbergia cavernae (strain ATCC BAA-8 / DSM 12333 / CCUG 43141 / JCM 11478 / NBRC 16432 / NCIMB 13614 / HKI 0122)).